The sequence spans 226 residues: Cytidylate kinase (226 aa).

10-18 provides a ligand contact to ATP; sequence GPASSGKST.

The protein belongs to the cytidylate kinase family. Type 1 subfamily.

It is found in the cytoplasm. The catalysed reaction is CMP + ATP = CDP + ADP. It carries out the reaction dCMP + ATP = dCDP + ADP. This chain is Cytidylate kinase, found in Streptococcus pyogenes serotype M1.